A 213-amino-acid polypeptide reads, in one-letter code: ATP phosphoribosyltransferase (213 aa).

This sequence belongs to the ATP phosphoribosyltransferase family. Short subfamily. As to quaternary structure, heteromultimer composed of HisG and HisZ subunits.

It is found in the cytoplasm. It carries out the reaction 1-(5-phospho-beta-D-ribosyl)-ATP + diphosphate = 5-phospho-alpha-D-ribose 1-diphosphate + ATP. It participates in amino-acid biosynthesis; L-histidine biosynthesis; L-histidine from 5-phospho-alpha-D-ribose 1-diphosphate: step 1/9. Catalyzes the condensation of ATP and 5-phosphoribose 1-diphosphate to form N'-(5'-phosphoribosyl)-ATP (PR-ATP). Has a crucial role in the pathway because the rate of histidine biosynthesis seems to be controlled primarily by regulation of HisG enzymatic activity. The polypeptide is ATP phosphoribosyltransferase (Bacillus velezensis (strain DSM 23117 / BGSC 10A6 / LMG 26770 / FZB42) (Bacillus amyloliquefaciens subsp. plantarum)).